Here is a 311-residue protein sequence, read N- to C-terminus: Malate dehydrogenase (311 aa).

NAD(+) is bound by residues 7 to 13 and Asp-34; that span reads GAAGGIG. Substrate is bound by residues Arg-81 and Arg-87. NAD(+)-binding positions include Asn-94 and 117–119; that span reads ITN. Substrate is bound by residues Asn-119 and Arg-153. The active-site Proton acceptor is His-177. Residue Met-227 coordinates NAD(+).

It belongs to the LDH/MDH superfamily. MDH type 1 family. Homodimer.

The enzyme catalyses (S)-malate + NAD(+) = oxaloacetate + NADH + H(+). Its function is as follows. Catalyzes the reversible oxidation of malate to oxaloacetate. The polypeptide is Malate dehydrogenase (Shewanella baltica (strain OS223)).